The primary structure comprises 394 residues: NAD(P)H-quinone oxidoreductase subunit H (394 aa).

It belongs to the complex I 49 kDa subunit family. In terms of assembly, NDH-1 can be composed of about 15 different subunits; different subcomplexes with different compositions have been identified which probably have different functions.

Its subcellular location is the cellular thylakoid membrane. The enzyme catalyses a plastoquinone + NADH + (n+1) H(+)(in) = a plastoquinol + NAD(+) + n H(+)(out). It catalyses the reaction a plastoquinone + NADPH + (n+1) H(+)(in) = a plastoquinol + NADP(+) + n H(+)(out). NDH-1 shuttles electrons from an unknown electron donor, via FMN and iron-sulfur (Fe-S) centers, to quinones in the respiratory and/or the photosynthetic chain. The immediate electron acceptor for the enzyme in this species is believed to be plastoquinone. Couples the redox reaction to proton translocation, and thus conserves the redox energy in a proton gradient. Cyanobacterial NDH-1 also plays a role in inorganic carbon-concentration. The polypeptide is NAD(P)H-quinone oxidoreductase subunit H (Prochlorococcus marinus (strain MIT 9303)).